The sequence spans 364 residues: Aminomethyltransferase (364 aa).

Belongs to the GcvT family. In terms of assembly, the glycine cleavage system is composed of four proteins: P, T, L and H.

The enzyme catalyses N(6)-[(R)-S(8)-aminomethyldihydrolipoyl]-L-lysyl-[protein] + (6S)-5,6,7,8-tetrahydrofolate = N(6)-[(R)-dihydrolipoyl]-L-lysyl-[protein] + (6R)-5,10-methylene-5,6,7,8-tetrahydrofolate + NH4(+). Its function is as follows. The glycine cleavage system catalyzes the degradation of glycine. In Geobacillus sp. (strain WCH70), this protein is Aminomethyltransferase.